The sequence spans 62 residues: Venom peptide 6 (62 aa).

The N-terminal stretch at 1-26 (MKSTSVFILFAGIAIMACLQMTGTEA) is a signal peptide. AXPX repeat units follow at residues 26–29 (AAPS), 30–33 (ASPN), and 40–43 (ADPD). The propeptide occupies 27 to 46 (APSASPNPTPVARADPDPEA).

It belongs to the MCD family. In terms of tissue distribution, expressed by the venom gland.

It is found in the secreted. The protein localises to the target cell membrane. Functionally, antimicrobial peptide with strong activity against the fungus B.cinerea (MIC=5 uM) and the Gram-positive bacterium S.aureus (MIC=50 uM), and no activity against C.albicans (MIC&gt;200 uM), and the Gram-negative bacterium E.coli (MIC&gt;200 uM). Shows cytolytic activity against insect cell lines. Has no hemolytic activity against human erythrocytes. In vivo, peptide injection in the vicinity of the head and thorax of lepidopteran larvae induces feeding disorder that lasts one or two days before recovering. The chain is Venom peptide 6 from Eumenes pomiformis (Potter wasp).